The chain runs to 109 residues: Nucleoid-associated protein Spro_1136 (109 aa).

2 disordered regions span residues 1 to 21 (MFGK…QEKM) and 90 to 109 (EKMA…KMPF). Low complexity predominate over residues 11–21 (MKQAQQMQEKM).

It belongs to the YbaB/EbfC family. As to quaternary structure, homodimer.

It is found in the cytoplasm. The protein resides in the nucleoid. In terms of biological role, binds to DNA and alters its conformation. May be involved in regulation of gene expression, nucleoid organization and DNA protection. In Serratia proteamaculans (strain 568), this protein is Nucleoid-associated protein Spro_1136.